The sequence spans 802 residues: Threonine--tRNA ligase 2, cytoplasmic (802 aa).

An N-acetylalanine modification is found at alanine 2. 2 coiled-coil regions span residues 3–23 (AEAL…EDIR) and 76–96 (AEER…AQEA). Low complexity predominate over residues 86–98 (ESAELEAAQEAGA). A disordered region spans residues 86-123 (ESAELEAAQEAGAQPPPSQSQDKDMKKKKMKESEADSE). Residues 106 to 123 (QDKDMKKKKMKESEADSE) show a composition bias toward basic and acidic residues. The 66-residue stretch at 157–222 (DTSNIITVRV…EGDSSLELLT (66 aa)) folds into the TGS domain. Residue serine 453 is modified to Phosphoserine. The short motif at 786-792 (KLKNLRK) is the Nuclear localization signal element.

Belongs to the class-II aminoacyl-tRNA synthetase family. May be a component of the multisynthetase complex (MSC), a large multi-subunit complex which contains at least eight different aminoacyl-tRNA synthetases plus three auxillary subunits AIMP1, AIMP2 and EEF1E1. Interacts with the MSC components EPRS1, AIMP1, AIMP2 and KARS1.

It localises to the cytoplasm. The protein resides in the nucleus. It catalyses the reaction tRNA(Thr) + L-threonine + ATP = L-threonyl-tRNA(Thr) + AMP + diphosphate + H(+). Its function is as follows. Catalyzes the attachment of threonine to tRNA(Thr) in a two-step reaction: threonine is first activated by ATP to form Thr-AMP and then transferred to the acceptor end of tRNA(Thr). Also edits incorrectly charged tRNA(Thr) via its editing domain, at the post-transfer stage. The protein is Threonine--tRNA ligase 2, cytoplasmic of Homo sapiens (Human).